The following is a 522-amino-acid chain: Target of rapamycin complex 2 subunit MAPKAP1 (522 aa).

Ala2 is modified (N-acetylalanine). An interaction with MAP3K2 region spans residues 2-184; it reads AFLDNPTIIL…KKIDVYLPLH (183 aa). Residues 2-267 form an interaction with NBN region; it reads AFLDNPTIIL…GFSTLALVEK (266 aa). Residues 38-59 are disordered; that stretch reads LEKTHPPSVPGDSGSEVQGSSG. Residue Thr86 is modified to Phosphothreonine. A phosphoserine mark is found at Ser128, Ser186, Ser315, and Ser356. Residues 139–267 form the CRIM domain; that stretch reads QSILSVRLEQ…GFSTLALVEK (129 aa). The segment at 279 to 353 is SIN1-type RBD; the sequence is LFVRINAAHG…QNAWEFCLVR (75 aa). In terms of domain architecture, SIN1-type PH spans 382–487; the sequence is HYKSFKVSMI…IVLKVNYILE (106 aa). Residue Arg393 coordinates a 1,2-diacyl-sn-glycero-3-phospho-(1D-myo-inositol-3,4,5-trisphosphate). Thr398 carries the post-translational modification Phosphothreonine. 2 residues coordinate a 1,2-diacyl-sn-glycero-3-phospho-(1D-myo-inositol-3,4,5-trisphosphate): Lys428 and Lys464. Positions 468–522 are interaction with ATF2; sequence FESDAATVSEIVLKVNYILESRASTARADYFAQKQRKLNRRTSFSFQKEKKSGQQ. Phosphoserine is present on Ser510.

This sequence belongs to the SIN1 family. Component of the mechanistic target of rapamycin complex 2 (mTORC2), consisting in two heterotretramers composed of MTOR, MLST8, RICTOR and MAPKAP1/SIN1. The mTORC2 core complex associates with PRR5/PROTOR1 and/or PRR5L/PROTOR2. Contrary to mTORC1, mTORC2 does not bind to and is not sensitive to FKBP12-rapamycin. Interacts with MAP3K2. Interacts with ATF2. Interacts with MAPK8. Interacts with GTP-bound HRAS and KRAS; inhibiting their activity. Interacts with IFNAR2. Phosphorylation at Ser-128 by PKC promotes relocalization to the perinuclear region, where the mTORC2 complex specifically mediates phosphorylation of SGK1. Phosphorylated at Thr-86 by AKT1 or RPS6KB1 in the presence of growth factors; the effect of this phosphorylation is however unclear. According to two studies, phosphorylation at Thr-86 by AKT1 is part of a positive feedback loop that increases mTORC2 activation. According to another study, phosphorylation at Thr-86 and Thr-398 by RPS6KB1 promotes dissociation from the mTORC2 complex, leading to inhibit mTORC2 signaling.

It is found in the cell membrane. It localises to the endoplasmic reticulum membrane. The protein resides in the early endosome membrane. Its subcellular location is the late endosome membrane. The protein localises to the lysosome membrane. It is found in the golgi apparatus membrane. It localises to the mitochondrion outer membrane. The protein resides in the cytoplasm. Its subcellular location is the perinuclear region. The protein localises to the nucleus. With respect to regulation, phosphatidylinositol 3,4,5-trisphosphate (PI(3,4,5)P3) promotes MTOR activation by relieving MAPKAP1/SIN1-mediated inhibition of MTOR that takes place in absence of PI(3,4,5)P3. Its function is as follows. Component of the mechanistic target of rapamycin complex 2 (mTORC2), which transduces signals from growth factors to pathways involved in proliferation, cytoskeletal organization, lipogenesis and anabolic output. In response to growth factors, mTORC2 phosphorylates and activates AGC protein kinase family members, including AKT (AKT1, AKT2 and AKT3), PKC (PRKCA, PRKCB and PRKCE) and SGK1. In contrast to mTORC1, mTORC2 is nutrient-insensitive. Within the mTORC2 complex, MAPKAP1/SIN1 acts as a substrate adapter which recognizes and binds AGC protein kinase family members for phosphorylation by MTOR. mTORC2 plays a critical role in AKT1 activation by mediating phosphorylation of different sites depending on the context, such as 'Thr-450', 'Ser-473', 'Ser-477' or 'Thr-479', facilitating the phosphorylation of the activation loop of AKT1 on 'Thr-308' by PDPK1/PDK1 which is a prerequisite for full activation. mTORC2 catalyzes the phosphorylation of SGK1 at 'Ser-422' and of PRKCA on 'Ser-657'. The mTORC2 complex also phosphorylates various proteins involved in insulin signaling, such as FBXW8 and IGF2BP1. mTORC2 acts upstream of Rho GTPases to regulate the actin cytoskeleton, probably by activating one or more Rho-type guanine nucleotide exchange factors. mTORC2 promotes the serum-induced formation of stress-fibers or F-actin. MAPKAP1 inhibits MAP3K2 by preventing its dimerization and autophosphorylation. Inhibits HRAS and KRAS independently of mTORC2 complex. Enhances osmotic stress-induced phosphorylation of ATF2 and ATF2-mediated transcription. Involved in ciliogenesis, regulates cilia length through its interaction with CCDC28B independently of mTORC2 complex. In Rattus norvegicus (Rat), this protein is Target of rapamycin complex 2 subunit MAPKAP1.